A 279-amino-acid chain; its full sequence is Probable endonuclease 4 (279 aa).

Positions 69, 109, 145, 179, 182, 216, 229, 231, and 261 each coordinate Zn(2+).

It belongs to the AP endonuclease 2 family. It depends on Zn(2+) as a cofactor.

It carries out the reaction Endonucleolytic cleavage to 5'-phosphooligonucleotide end-products.. In terms of biological role, endonuclease IV plays a role in DNA repair. It cleaves phosphodiester bonds at apurinic or apyrimidinic (AP) sites, generating a 3'-hydroxyl group and a 5'-terminal sugar phosphate. This is Probable endonuclease 4 from Serratia proteamaculans (strain 568).